We begin with the raw amino-acid sequence, 482 residues long: U2 small nuclear ribonucleoprotein auxiliary factor 35 kDa subunit-related protein 2 (482 aa).

The interval 1–59 is disordered; the sequence is MAAPEKMTFPEKPSHKKYRAALKKEKRKKRRQELARLRDSGLSQKEEEEDTFIEEQQLE. The segment covering 14–31 has biased composition (basic residues); that stretch reads SHKKYRAALKKEKRKKRR. Lys45 participates in a covalent cross-link: Glycyl lysine isopeptide (Lys-Gly) (interchain with G-Cter in SUMO2). A compositionally biased stretch (acidic residues) spans 46 to 58; sequence EEEEDTFIEEQQL. Lys62 is covalently cross-linked (Glycyl lysine isopeptide (Lys-Gly) (interchain with G-Cter in SUMO2)). The interval 115 to 135 is disordered; it reads QRKEREEEEQKRQEKKEKEEA. The segment at 166 to 194 adopts a C3H1-type 1 zinc-finger fold; it reads EKDRANCPFYSKTGACRFGDRCSRKHNFP. An RRM domain is found at 198-304; sequence PTLLIKSMFT…RQLQCEFCPV (107 aa). The C3H1-type 2 zinc finger occupies 306 to 333; sequence RWKMAICGLFEIQQCPRGKHCNFLHVFR. At Ser349 the chain carries Phosphoserine. Positions 351–482 are disordered; it reads DRTGSSFGKN…DRTVQSPKSK (132 aa). Basic and acidic residues-rich tracts occupy residues 360–375 and 383–398; these read NSER…DYYS and PSPD…SERK. Ser384 is modified (phosphoserine). Residues 399–412 show a composition bias toward basic residues; the sequence is SSRHRGKKSHKRTS. Over residues 413-435 the composition is skewed to basic and acidic residues; sequence KSRERHNSRSRGRNRDRSRDRSR. Positions 436–454 are enriched in basic residues; that stretch reads GRGSRSRSRSRSRRSRRSR.

Component of the U11/U12 snRNPs that are part of the U12-type spliceosome. Interacts (via RS domain) with SRSF1 and SRSF2. Interacts with U2AF2/U2AF65. In terms of processing, phosphorylated in the RS domain by SRPK1. In terms of tissue distribution, widely expressed.

The protein resides in the nucleus. Functionally, pre-mRNA-binding protein required for splicing of both U2- and U12-type introns. Selectively interacts with the 3'-splice site of U2- and U12-type pre-mRNAs and promotes different steps in U2 and U12 intron splicing. Recruited to U12 pre-mRNAs in an ATP-dependent manner and is required for assembly of the pre-spliceosome, a precursor to other spliceosomal complexes. For U2-type introns, it is selectively and specifically required for the second step of splicing. The chain is U2 small nuclear ribonucleoprotein auxiliary factor 35 kDa subunit-related protein 2 (ZRSR2) from Homo sapiens (Human).